A 192-amino-acid chain; its full sequence is UPF0312 protein Psyr_0457 (192 aa).

The signal sequence occupies residues 1 to 23; that stretch reads MLKKSLAALALGTALLSAGQAMA.

Belongs to the UPF0312 family. Type 1 subfamily.

The protein localises to the periplasm. In Pseudomonas syringae pv. syringae (strain B728a), this protein is UPF0312 protein Psyr_0457.